We begin with the raw amino-acid sequence, 242 residues long: Prosalusin (242 aa).

An N-terminal signal peptide occupies residues 1-26 (MAAATRSCRPWGSLLGLIWLVSAAAA). Residues 27-189 (SWDLSSLRCN…SSWVVYGTNY (163 aa)) constitute a propeptide that is removed on maturation. ATP is bound at residue 93-100 (GWTGTGKS). N-linked (GlcNAc...) asparagine glycosylation occurs at asparagine 149.

This sequence belongs to the ClpA/ClpB family. Torsin subfamily.

The protein localises to the secreted. Salusin may be a endocrine and/or paracrine factor able to increase intracellular calcium concentrations and induce cell mitogenesis. Salusin may also be a potent hypotensive peptide. This Bos taurus (Bovine) protein is Prosalusin (TOR2A).